Here is a 381-residue protein sequence, read N- to C-terminus: S-adenosylmethionine synthase (381 aa).

H15 provides a ligand contact to ATP. Position 17 (D17) interacts with Mg(2+). K(+) is bound at residue E43. Residues E56 and Q99 each coordinate L-methionine. The tract at residues 99-109 is flexible loop; it reads QSLDIAQGVDN. ATP-binding positions include 164–166, 230–231, D239, 245–246, and K266; these read DGK, RF, and RK. L-methionine is bound at residue D239. Residue K270 participates in L-methionine binding.

This sequence belongs to the AdoMet synthase family. Homotetramer; dimer of dimers. Requires Mg(2+) as cofactor. It depends on K(+) as a cofactor.

The protein localises to the cytoplasm. It carries out the reaction L-methionine + ATP + H2O = S-adenosyl-L-methionine + phosphate + diphosphate. It participates in amino-acid biosynthesis; S-adenosyl-L-methionine biosynthesis; S-adenosyl-L-methionine from L-methionine: step 1/1. In terms of biological role, catalyzes the formation of S-adenosylmethionine (AdoMet) from methionine and ATP. The overall synthetic reaction is composed of two sequential steps, AdoMet formation and the subsequent tripolyphosphate hydrolysis which occurs prior to release of AdoMet from the enzyme. The chain is S-adenosylmethionine synthase from Legionella jeonii.